The chain runs to 176 residues: Nudix hydrolase 18, mitochondrial (176 aa).

Residues 1 to 21 (MVCLVSRTGRQSQRYNKGRRQ) constitute a mitochondrion transit peptide. Residues 22–153 (VVGCIPYRLK…WMKEALDVLV (132 aa)) form the Nudix hydrolase domain. The Nudix box signature appears at 60–81 (GGWELDESVEEAASRESLEEAG). Mg(2+) is bound by residues Glu75 and Glu79.

It belongs to the Nudix hydrolase family. Mg(2+) serves as cofactor. It depends on Mn(2+) as a cofactor. Expressed in roots, stems and inflorescences.

The protein localises to the mitochondrion. Probably mediates the hydrolysis of some nucleoside diphosphate derivatives. This is Nudix hydrolase 18, mitochondrial (NUDT18) from Arabidopsis thaliana (Mouse-ear cress).